Reading from the N-terminus, the 352-residue chain is Uroporphyrinogen decarboxylase (352 aa).

Residues 27 to 31 (RQAGR), Asp77, Tyr154, Thr209, and His325 each bind substrate.

It belongs to the uroporphyrinogen decarboxylase family. In terms of assembly, homodimer.

The protein resides in the cytoplasm. It catalyses the reaction uroporphyrinogen III + 4 H(+) = coproporphyrinogen III + 4 CO2. Its pathway is porphyrin-containing compound metabolism; protoporphyrin-IX biosynthesis; coproporphyrinogen-III from 5-aminolevulinate: step 4/4. Its function is as follows. Catalyzes the decarboxylation of four acetate groups of uroporphyrinogen-III to yield coproporphyrinogen-III. The chain is Uroporphyrinogen decarboxylase from Legionella pneumophila (strain Lens).